The sequence spans 132 residues: Ribosome-binding factor A (132 aa).

It belongs to the RbfA family. In terms of assembly, monomer. Binds 30S ribosomal subunits, but not 50S ribosomal subunits or 70S ribosomes.

It localises to the cytoplasm. In terms of biological role, one of several proteins that assist in the late maturation steps of the functional core of the 30S ribosomal subunit. Associates with free 30S ribosomal subunits (but not with 30S subunits that are part of 70S ribosomes or polysomes). Required for efficient processing of 16S rRNA. May interact with the 5'-terminal helix region of 16S rRNA. The protein is Ribosome-binding factor A of Caldicellulosiruptor bescii (strain ATCC BAA-1888 / DSM 6725 / KCTC 15123 / Z-1320) (Anaerocellum thermophilum).